Consider the following 175-residue polypeptide: Ribosome maturation factor RimM (175 aa).

The 74-residue stretch at 100–173 (EGEYYFHEII…IIIIRPMEGL (74 aa)) folds into the PRC barrel domain.

Belongs to the RimM family. Binds ribosomal protein uS19.

The protein resides in the cytoplasm. Functionally, an accessory protein needed during the final step in the assembly of 30S ribosomal subunit, possibly for assembly of the head region. Essential for efficient processing of 16S rRNA. May be needed both before and after RbfA during the maturation of 16S rRNA. It has affinity for free ribosomal 30S subunits but not for 70S ribosomes. The protein is Ribosome maturation factor RimM of Geobacillus thermodenitrificans (strain NG80-2).